The chain runs to 701 residues: Coiled-coil domain-containing protein 62 (701 aa).

Coiled-coil stretches lie at residues 61-197 and 241-342; these read ETST…LQAR and TCVV…QFLN. A disordered region spans residues 624 to 652; the sequence is KSAEREEESAALPDRRTSANEKDDFSPTS. Residues 636-648 show a composition bias toward basic and acidic residues; the sequence is PDRRTSANEKDDF. Short sequence motifs (LXXLL motif) lie at residues 654–658 and 670–674; these read LQRLL and LSTLL.

As to quaternary structure, interacts with ESR1 and ESR2 in the presence of estradiol/E2. The interaction with ESR2 recruits CCDC62 to ER target genes, including cyclin-D1/CCND1 AP-1 promoter. Interacts with GOPC. As to expression, highly expressed in testis, not detected in other tissues (at protein level). Expressed at low levels in the epididymis, lung, spleen, bladder, kidney, liver, muscle.

It is found in the cytoplasm. The protein resides in the nucleus. The protein localises to the cytoplasmic vesicle. It localises to the secretory vesicle. Its subcellular location is the acrosome. Its function is as follows. Nuclear receptor coactivator that can enhance preferentially estrogen receptors ESR1 and ESR2 transactivation. Also modulates progesterone/PGR, glucocorticoid/NR3C1 and androgen/AR receptors transactivation, although at lower level; little effect on vitamin D receptor/VDR. Required for normal spermiogenesis. It probably plays a role in acrosome formation. The protein is Coiled-coil domain-containing protein 62 (Ccdc62) of Mus musculus (Mouse).